Reading from the N-terminus, the 464-residue chain is UPF0210 protein MA_1691 (464 aa).

Belongs to the UPF0210 family.

The protein is UPF0210 protein MA_1691 of Methanosarcina acetivorans (strain ATCC 35395 / DSM 2834 / JCM 12185 / C2A).